A 778-amino-acid chain; its full sequence is Lon protease (778 aa).

Positions 6–207 constitute a Lon N-terminal domain; sequence LPLMALRDMV…TVISMLNSNI (202 aa). An ATP-binding site is contributed by 356–363; it reads GPPGVGKT. Positions 592 to 773 constitute a Lon proteolytic domain; that stretch reads EDQIGSTTGL…DQVLKHALVG (182 aa). Residues Ser-679 and Lys-722 contribute to the active site.

Belongs to the peptidase S16 family. As to quaternary structure, homohexamer. Organized in a ring with a central cavity.

The protein resides in the cytoplasm. The enzyme catalyses Hydrolysis of proteins in presence of ATP.. Functionally, ATP-dependent serine protease that mediates the selective degradation of mutant and abnormal proteins as well as certain short-lived regulatory proteins. Required for cellular homeostasis and for survival from DNA damage and developmental changes induced by stress. Degrades polypeptides processively to yield small peptide fragments that are 5 to 10 amino acids long. Binds to DNA in a double-stranded, site-specific manner. This is Lon protease from Rickettsia conorii (strain ATCC VR-613 / Malish 7).